The primary structure comprises 631 residues: PTS system glucosamine-specific EIICBA component (631 aa).

Positions 3-382 (KKAFQILQQL…WNLKTPGRET (380 aa)) constitute a PTS EIIC type-1 domain. The next 8 membrane-spanning stretches (helical) occupy residues 12-32 (LGRA…LLRF), 56-76 (LIFA…AGLA), 106-126 (HLID…AYLY), 149-169 (IITS…WPLI), 196-216 (LLIP…MMGE), 243-263 (FMMG…LAII), 298-318 (FLFV…VIFV), and 350-370 (VVIP…RFAI). The 82-residue stretch at 397 to 478 (DQLAFHVLQA…KTIMAGGVPA (82 aa)) folds into the PTS EIIB type-1 domain. The active-site Phosphocysteine intermediate; for EIIB activity is cysteine 419. Cysteine 419 is modified (phosphocysteine). The region spanning 515-619 (DQVFSEKMMG…SAITPVIFTN (105 aa)) is the PTS EIIA type-1 domain. The active-site Tele-phosphohistidine intermediate; for EIIA activity is the histidine 567. Histidine 567 carries the phosphohistidine modification.

The protein localises to the cell membrane. It carries out the reaction D-glucosamine(out) + N(pros)-phospho-L-histidyl-[protein] = D-glucosamine 6-phosphate(in) + L-histidyl-[protein]. Functionally, the phosphoenolpyruvate-dependent sugar phosphotransferase system (sugar PTS), a major carbohydrate active transport system, catalyzes the phosphorylation of incoming sugar substrates concomitantly with their translocation across the cell membrane. This system is involved in glucosamine transport. In vitro, when expressed in the absence of GamR and NagP, can transport N-acetylglucosamine. In addition, plays an important role in the phosphorylation of EIIA-deficient PTS transporters. The EIIA domain can transfer a phosphoryl group to EIIA-deficient PTS transporters, enabling growth with maltose, N-acetylglucosamine, sucrose or trehalose as the sole carbon source. This chain is PTS system glucosamine-specific EIICBA component, found in Bacillus subtilis (strain 168).